An 82-amino-acid polypeptide reads, in one-letter code: Cytochrome c-551 (82 aa).

Heme c-binding residues include Cys12, Cys15, His16, and Met61.

Post-translationally, binds 1 heme c group covalently per subunit.

Its function is as follows. This is a prokaryotic monoheme cytochrome, unreactive with mitochondrial cytochrome C oxidase or reductase. It functions in nitrite and nitrate respiration in Pseudomonas, but it is also found in other bacteria. This Ectopseudomonas mendocina (Pseudomonas mendocina) protein is Cytochrome c-551.